The following is a 563-amino-acid chain: Coiled-coil domain-containing protein 38 (563 aa).

A compositionally biased stretch (polar residues) spans 1–11; it reads MSSNLLPTLNS. Residues 1-21 are disordered; it reads MSSNLLPTLNSGGKVKDGSTK. Residues 129–212 adopt a coiled-coil conformation; that stretch reads KRNTIKKFEK…VKSEIAKTEF (84 aa). Positions 272 to 311 are disordered; that stretch reads ESGRTAVLSEDASQGRDSQGKPSRSLTRTPEKKKSNLAES. Residues 282-299 show a composition bias toward polar residues; sequence DASQGRDSQGKPSRSLTR. 2 coiled-coil regions span residues 384-415 and 497-522; these read NIEF…KSKL and RDEK…AVAQ. The segment at 522-563 is disordered; the sequence is QPKKKLGRRLVFHSKPPSGNKQQLPLVNETKTKSQEEEYFFT. Residues 523–533 are compositionally biased toward basic residues; it reads PKKKLGRRLVF.

As to quaternary structure, interacts with CCDC42, CFAP53, IFT88 and ODF2. Interacts with CCDC146. Interacts with TEKT3. Interacts with ubiquitinated histone H2A.

The protein localises to the cytoplasm. The protein resides in the cytoskeleton. It is found in the microtubule organizing center. It localises to the centrosome. Its subcellular location is the perinuclear region. The protein localises to the cell projection. The protein resides in the cilium. It is found in the flagellum. Its function is as follows. Essential for male fertility. Required for sperm flagellum biogenesis. Also required for acrosome biogenesis. Required for the attachment of developing acrosomes to the nucleus during spermiogenesis and may be involved in the transport of fibrous sheath components. The polypeptide is Coiled-coil domain-containing protein 38 (CCDC38) (Homo sapiens (Human)).